The chain runs to 256 residues: Trans-aconitate 2-methyltransferase (256 aa).

It belongs to the methyltransferase superfamily. Tam family.

The protein localises to the cytoplasm. It catalyses the reaction trans-aconitate + S-adenosyl-L-methionine = (E)-3-(methoxycarbonyl)pent-2-enedioate + S-adenosyl-L-homocysteine. In terms of biological role, catalyzes the S-adenosylmethionine monomethyl esterification of trans-aconitate. This is Trans-aconitate 2-methyltransferase from Rhodopseudomonas palustris (strain BisB5).